The primary structure comprises 475 residues: Probable proline--tRNA ligase, mitochondrial (475 aa).

Residues 1-29 constitute a mitochondrion transit peptide; that stretch reads MEGLLTRCRTLSALATCSLRHSRCIVRKC.

Belongs to the class-II aminoacyl-tRNA synthetase family.

It localises to the mitochondrion matrix. The catalysed reaction is tRNA(Pro) + L-proline + ATP = L-prolyl-tRNA(Pro) + AMP + diphosphate. Its function is as follows. Mitochondrial aminoacyl-tRNA synthetase that catalyzes the specific attachment of the proline amino acid (aa) to the homologous transfer RNA (tRNA), further participating in protein synthesis. The reaction occurs in a two steps: proline is first activated by ATP to form Pro-AMP and then transferred to the acceptor end of tRNA(Pro). This is Probable proline--tRNA ligase, mitochondrial (Pars2) from Rattus norvegicus (Rat).